Consider the following 185-residue polypeptide: MSTNKEEEHQIVCTQDFLRQYYVSESVSIQFGLNNKTIRTINEEEFNNAAMCIMTRTNYPESTLKRSASTYLLNSYHKKPATLSLPFVFGDTINLSEDMEDNNENNLLYSDTLYGDDSLTQRGDQVVYKIDTQEEDSSFTLLQSEANETRPLSSSSTPQILQSDYSVVMQEGQTSNGSIFQFSSP.

Residues Ala-146–Val-168 form a disordered region.

In terms of biological role, potential transcriptional regulator that is required to activate expression of a number of early meiotic genes including HOP1. The protein is Meiotic recombination protein REC104 (REC104) of Saccharomyces pastorianus (Lager yeast).